The primary structure comprises 94 residues: Co-chaperonin GroES (94 aa).

Belongs to the GroES chaperonin family. Heptamer of 7 subunits arranged in a ring. Interacts with the chaperonin GroEL.

The protein localises to the cytoplasm. Together with the chaperonin GroEL, plays an essential role in assisting protein folding. The GroEL-GroES system forms a nano-cage that allows encapsulation of the non-native substrate proteins and provides a physical environment optimized to promote and accelerate protein folding. GroES binds to the apical surface of the GroEL ring, thereby capping the opening of the GroEL channel. The protein is Co-chaperonin GroES of Tetragenococcus halophilus (Pediococcus halophilus).